Consider the following 258-residue polypeptide: UPF0246 protein YaaA (258 aa).

It belongs to the UPF0246 family.

This Escherichia coli O157:H7 (strain EC4115 / EHEC) protein is UPF0246 protein YaaA.